Here is a 403-residue protein sequence, read N- to C-terminus: MSKFNRIHLVVLDSVGIGAAPDADKFFNAGVADTDSDTLGHISETAGLAVPNMAKIGLGHIPRPVPLKTVPAEADPTGYVTKLEEVSLGKDTMTGHWEIMGLNITEPFDTFWDGFPEEIIQKIEAFSGRKVIREANKPYSGTKVIDDFGPRQMETGELIVYTSADPVLQIAAHEEVIPIEELYRICEYARSITLERPALLGRIIARPYVGEPGNFTRTANRRDYAVSPFQDTVLNKLADAGISTYAVGKINDIFNGSGITNDMGHNKSNSHGIDTLIKTLQLPAFTKGLSFTNLVDFDASFGHRRDPEGYRDCLHEFDRRLPEIIANMKDDDLLLITADHGNDPTYAGTDHTREYIPLLAYSASCTGAGVIPQGHFADISATIAENFGVDTAMIGTSFLADLV.

Aspartate 13, aspartate 298, histidine 303, aspartate 339, histidine 340, and histidine 351 together coordinate Mn(2+).

It belongs to the phosphopentomutase family. Mn(2+) serves as cofactor.

Its subcellular location is the cytoplasm. The enzyme catalyses 2-deoxy-alpha-D-ribose 1-phosphate = 2-deoxy-D-ribose 5-phosphate. The catalysed reaction is alpha-D-ribose 1-phosphate = D-ribose 5-phosphate. It functions in the pathway carbohydrate degradation; 2-deoxy-D-ribose 1-phosphate degradation; D-glyceraldehyde 3-phosphate and acetaldehyde from 2-deoxy-alpha-D-ribose 1-phosphate: step 1/2. In terms of biological role, isomerase that catalyzes the conversion of deoxy-ribose 1-phosphate (dRib-1-P) and ribose 1-phosphate (Rib-1-P) to deoxy-ribose 5-phosphate (dRib-5-P) and ribose 5-phosphate (Rib-5-P), respectively. This Streptococcus equi subsp. zooepidemicus (strain MGCS10565) protein is Phosphopentomutase.